We begin with the raw amino-acid sequence, 167 residues long: Small ribosomal subunit protein mS25 (167 aa).

The protein belongs to the mitochondrion-specific ribosomal protein mS25 family. In terms of assembly, component of the mitochondrial ribosome small subunit (28S) which comprises a 12S rRNA and about 30 distinct proteins.

It localises to the mitochondrion. The protein is Small ribosomal subunit protein mS25 (mRpS25) of Drosophila melanogaster (Fruit fly).